We begin with the raw amino-acid sequence, 384 residues long: Flap endonuclease 1 (384 aa).

The tract at residues 1-108 is N-domain; the sequence is MGIHKLMDLL…GELARRQKAK (108 aa). Asp-34 is a binding site for Mg(2+). Arg-74 contributes to the DNA binding site. Residues Asp-90, Glu-162, Glu-164, Asp-183, and Asp-185 each contribute to the Mg(2+) site. The tract at residues 126–254 is I-domain; the sequence is EALKQEQRNL…VNAFKLITEH (129 aa). Residue Glu-162 participates in DNA binding. DNA-binding residues include Gly-232 and Asp-234. Asp-234 is a binding site for Mg(2+). Residues 340-384 are disordered; that stretch reads AKEHKGSQTRLNDFFKVQPKDTSSTSKASKKPTNTKSANKKGGKK. Residues 346–354 form an interaction with PCNA region; it reads SQTRLNDFF. The span at 359 to 376 shows a compositional bias: low complexity; sequence KDTSSTSKASKKPTNTKS.

The protein belongs to the XPG/RAD2 endonuclease family. FEN1 subfamily. As to quaternary structure, interacts with PCNA. Three molecules of FEN1 bind to one PCNA trimer with each molecule binding to one PCNA monomer. PCNA stimulates the nuclease activity without altering cleavage specificity. Requires Mg(2+) as cofactor. Phosphorylated. Phosphorylation upon DNA damage induces relocalization to the nuclear plasma.

It is found in the nucleus. Its subcellular location is the nucleolus. The protein resides in the nucleoplasm. It localises to the mitochondrion. Structure-specific nuclease with 5'-flap endonuclease and 5'-3' exonuclease activities involved in DNA replication and repair. During DNA replication, cleaves the 5'-overhanging flap structure that is generated by displacement synthesis when DNA polymerase encounters the 5'-end of a downstream Okazaki fragment. It enters the flap from the 5'-end and then tracks to cleave the flap base, leaving a nick for ligation. Also involved in the long patch base excision repair (LP-BER) pathway, by cleaving within the apurinic/apyrimidinic (AP) site-terminated flap. Acts as a genome stabilization factor that prevents flaps from equilibrating into structures that lead to duplications and deletions. Also possesses 5'-3' exonuclease activity on nicked or gapped double-stranded DNA, and exhibits RNase H activity. Also involved in replication and repair of rDNA and in repairing mitochondrial DNA. The protein is Flap endonuclease 1 of Tetrahymena thermophila (strain SB210).